The chain runs to 285 residues: BAG family molecular chaperone regulator 2 (285 aa).

Positions 37–113 constitute a Ubiquitin-like domain; that stretch reads RGIRVRVKYG…LILIEDPISQ (77 aa). Positions 132-210 constitute a BAG domain; it reads AISDISFQVE…KYVEALDLLK (79 aa). Ser-244 carries the phosphoserine modification.

Binds to the ATPase domain of HSP70/HSC70 chaperones.

In terms of biological role, co-chaperone that regulates diverse cellular pathways, such as programmed cell death and stress responses. The chain is BAG family molecular chaperone regulator 2 (BAG2) from Arabidopsis thaliana (Mouse-ear cress).